Consider the following 183-residue polypeptide: MNKLIPLPREFFARDTNVVSTELIGKTLYFQGKTAIITETESYIGQNDPACHAARGRTKRTDIMFGPAGFSYVYLIYGMYYCLNFVTEAKGFPAATLIRGVHVISPENLYLNGPGKLCKYLGINISHNKCDLINNNEFFVGDIGLKLPYSTTARIGITKGTDKLWRYVVTDITNLISQYNVQP.

The protein belongs to the DNA glycosylase MPG family.

This is Putative 3-methyladenine DNA glycosylase from Rickettsia rickettsii (strain Iowa).